A 351-amino-acid polypeptide reads, in one-letter code: Selenide, water dikinase (351 aa).

The active site involves Sec15. Sec15 is a non-standard amino acid (selenocysteine). Residues Lys18 and 47-49 contribute to the ATP site; that span reads DNE. Residue Asp50 coordinates Mg(2+). Residues Asp67, Asp90, and 138–140 each bind ATP; that span reads GHS. Position 90 (Asp90) interacts with Mg(2+). Asp227 provides a ligand contact to Mg(2+).

This sequence belongs to the selenophosphate synthase 1 family. Class I subfamily. As to quaternary structure, homodimer. It depends on Mg(2+) as a cofactor.

The enzyme catalyses hydrogenselenide + ATP + H2O = selenophosphate + AMP + phosphate + 2 H(+). Its function is as follows. Synthesizes selenophosphate from selenide and ATP. This is Selenide, water dikinase from Nitratidesulfovibrio vulgaris (strain DP4) (Desulfovibrio vulgaris).